The sequence spans 159 residues: Endoribonuclease YbeY (159 aa).

Positions 125, 129, and 135 each coordinate Zn(2+).

It belongs to the endoribonuclease YbeY family. Zn(2+) serves as cofactor.

It is found in the cytoplasm. In terms of biological role, single strand-specific metallo-endoribonuclease involved in late-stage 70S ribosome quality control and in maturation of the 3' terminus of the 16S rRNA. This chain is Endoribonuclease YbeY, found in Enterococcus faecalis (strain ATCC 700802 / V583).